The chain runs to 515 residues: Endoglucanase 2 (515 aa).

The N-terminal stretch at 1–31 is a signal peptide; that stretch reads MVAKPRSRCCCCSVFIGVIILIAIIIAVIFT. N-linked (GlcNAc...) asparagine glycosylation occurs at Asn37. Asp100 serves as the catalytic Nucleophile. Asn250 carries an N-linked (GlcNAc...) asparagine glycan. His433 is a catalytic residue. N-linked (GlcNAc...) asparagine glycosylation occurs at Asn475. Asp480 is an active-site residue. Asn483 carries an N-linked (GlcNAc...) asparagine glycan. Glu489 is a catalytic residue.

This sequence belongs to the glycosyl hydrolase 9 (cellulase E) family.

Its subcellular location is the secreted. It carries out the reaction Endohydrolysis of (1-&gt;4)-beta-D-glucosidic linkages in cellulose, lichenin and cereal beta-D-glucans.. The sequence is that of Endoglucanase 2 from Arabidopsis thaliana (Mouse-ear cress).